The sequence spans 233 residues: Cytochrome c oxidase subunit 3 (233 aa).

The next 4 membrane-spanning stretches (helical) occupy residues 62-82 (VVLFLVAESAIFLGLFTAYLI), 98-118 (LELLLPGVNSIILISSSFVMH), 135-155 (WFGITAAMGIIFLAGQMYEYF), and 172-192 (VLTGFHGLHVTFGLLLILSVL).

Belongs to the cytochrome c oxidase subunit 3 family.

The protein resides in the cell membrane. The catalysed reaction is 4 Fe(II)-[cytochrome c] + O2 + 8 H(+)(in) = 4 Fe(III)-[cytochrome c] + 2 H2O + 4 H(+)(out). This chain is Cytochrome c oxidase subunit 3 (ctaE), found in Synechocystis sp. (strain ATCC 27184 / PCC 6803 / Kazusa).